We begin with the raw amino-acid sequence, 315 residues long: Protoheme IX farnesyltransferase (315 aa).

The next 9 membrane-spanning stretches (helical) occupy residues 32 to 52, 53 to 73, 93 to 113, 120 to 140, 153 to 173, 180 to 200, 226 to 246, 249 to 269, and 295 to 315; these read VMSL…GHMN, PVLA…SGAL, IPAG…LSAF, LMVN…YAVI, IVIG…AATG, LVLF…LSLF, ALFY…MGFA, FYGV…WRLW, and IFAV…FGVF.

Belongs to the UbiA prenyltransferase family. Protoheme IX farnesyltransferase subfamily.

The protein localises to the cell inner membrane. It catalyses the reaction heme b + (2E,6E)-farnesyl diphosphate + H2O = Fe(II)-heme o + diphosphate. It functions in the pathway porphyrin-containing compound metabolism; heme O biosynthesis; heme O from protoheme: step 1/1. Converts heme B (protoheme IX) to heme O by substitution of the vinyl group on carbon 2 of heme B porphyrin ring with a hydroxyethyl farnesyl side group. The polypeptide is Protoheme IX farnesyltransferase (Brucella suis (strain ATCC 23445 / NCTC 10510)).